Reading from the N-terminus, the 182-residue chain is T-cell surface glycoprotein CD3 gamma chain (182 aa).

Residues Met1–Ala22 form the signal peptide. The Extracellular portion of the chain corresponds to Gln23–Ser116. The Ig-like domain occupies Gln37–Ser94. Cys46 and Cys87 are oxidised to a cystine. N-linked (GlcNAc...) asparagine glycosylation is present at Asn66. Residues Gly117–Ala137 form a helical membrane-spanning segment. At Gly138–Lys182 the chain is on the cytoplasmic side. Ser145 carries the post-translational modification Phosphoserine. Ser148 carries the phosphoserine; by PKC modification. The region spanning Asp149–Asn177 is the ITAM domain. Positions Leu153–Leu154 match the Di-leucine motif motif.

In terms of assembly, the TCR-CD3 complex is composed of a CD3D/CD3E and a CD3G/CD3E heterodimers that preferentially associate with TCRalpha and TCRbeta, respectively, to form TCRalpha/CD3E/CD3G and TCRbeta/CD3G/CD3E trimers. In turn, the hexamer interacts with CD3Z homodimer to form the TCR-CD3 complex. Alternatively, TCRalpha and TCRbeta can be replaced by TCRgamma and TCRdelta. Post-translationally, phosphorylated on Tyr residues after T-cell receptor triggering by LCK in association with CD4/CD8. Phosphorylated also by PKC; leading to the TCR complex down-regulation. Phosphorylated on Tyr residues after T-cell receptor triggering by LCK in association with CD4/CD8.

The protein localises to the cell membrane. Its function is as follows. Part of the TCR-CD3 complex present on T-lymphocyte cell surface that plays an essential role in adaptive immune response. When antigen presenting cells (APCs) activate T-cell receptor (TCR), TCR-mediated signals are transmitted across the cell membrane by the CD3 chains CD3D, CD3E, CD3G and CD3Z. All CD3 chains contain immunoreceptor tyrosine-based activation motifs (ITAMs) in their cytoplasmic domain. Upon TCR engagement, these motifs become phosphorylated by Src family protein tyrosine kinases LCK and FYN, resulting in the activation of downstream signaling pathways. In addition to this role of signal transduction in T-cell activation, CD3G plays an essential role in the dynamic regulation of TCR expression at the cell surface. Indeed, constitutive TCR cycling is dependent on the di-leucine-based (diL) receptor-sorting motif present in CD3G. In Rattus norvegicus (Rat), this protein is T-cell surface glycoprotein CD3 gamma chain (Cd3g).